The following is a 107-amino-acid chain: Nucleoid-associated protein mlr5504 (107 aa).

This sequence belongs to the YbaB/EbfC family. In terms of assembly, homodimer.

Its subcellular location is the cytoplasm. The protein localises to the nucleoid. In terms of biological role, binds to DNA and alters its conformation. May be involved in regulation of gene expression, nucleoid organization and DNA protection. This chain is Nucleoid-associated protein mlr5504, found in Mesorhizobium japonicum (strain LMG 29417 / CECT 9101 / MAFF 303099) (Mesorhizobium loti (strain MAFF 303099)).